A 343-amino-acid polypeptide reads, in one-letter code: Calcium/calmodulin-dependent protein kinase type 1B (343 aa).

The Protein kinase domain maps to 15-270; that stretch reads YEIRERLGSG…CQQALRHLWI (256 aa). ATP is bound by residues 21–29 and Lys44; that span reads LGSGAFSEV. Asp136 serves as the catalytic Proton acceptor. The calmodulin-binding stretch occupies residues 290–311; sequence KNFARTHWKRAFNATSFLRHIR. The segment at 319 to 343 is disordered; the sequence is GEGASEQGMARHSHSGLRAGQPPKW.

This sequence belongs to the protein kinase superfamily. CAMK Ser/Thr protein kinase family. CaMK subfamily. In terms of processing, phosphorylated by CAMKK1.

The protein localises to the cytoplasm. It is found in the nucleus. The catalysed reaction is L-seryl-[protein] + ATP = O-phospho-L-seryl-[protein] + ADP + H(+). It catalyses the reaction L-threonyl-[protein] + ATP = O-phospho-L-threonyl-[protein] + ADP + H(+). Its activity is regulated as follows. Activated by Ca(2+)/calmodulin. Functionally, calcium/calmodulin-dependent protein kinase belonging to a proposed calcium-triggered signaling cascade. In vitro phosphorylates CREB1 and SYN1/synapsin I. Phosphorylates and activates CAMK1. The chain is Calcium/calmodulin-dependent protein kinase type 1B (PNCK) from Homo sapiens (Human).